Consider the following 434-residue polypeptide: Glutamyl-tRNA reductase (434 aa).

Residues 49-52 (TCNR), Ser109, 114-116 (EPQ), and Gln120 each bind substrate. Cys50 serves as the catalytic Nucleophile. 189–194 (GAGEMC) provides a ligand contact to NADP(+).

This sequence belongs to the glutamyl-tRNA reductase family. As to quaternary structure, homodimer.

The catalysed reaction is (S)-4-amino-5-oxopentanoate + tRNA(Glu) + NADP(+) = L-glutamyl-tRNA(Glu) + NADPH + H(+). It functions in the pathway porphyrin-containing compound metabolism; protoporphyrin-IX biosynthesis; 5-aminolevulinate from L-glutamyl-tRNA(Glu): step 1/2. Catalyzes the NADPH-dependent reduction of glutamyl-tRNA(Glu) to glutamate 1-semialdehyde (GSA). The chain is Glutamyl-tRNA reductase from Geotalea daltonii (strain DSM 22248 / JCM 15807 / FRC-32) (Geobacter daltonii).